A 545-amino-acid chain; its full sequence is uncharacterized protein (545 aa).

Composition is skewed to basic and acidic residues over residues 34-44 (PMNKQNEKLKT) and 53-63 (PRNDYSRRVSR). Disordered regions lie at residues 34–98 (PMNK…PESN), 269–296 (QNGTAGYSNSRKTSSPSYHKQSIPPQDS), and 415–444 (ERPQRKTEHVKTPEENLQTKNPTTMTSAPE). A compositionally biased stretch (polar residues) spans 69–78 (TDSSEQQITA). The span at 415-428 (ERPQRKTEHVKTPE) shows a compositional bias: basic and acidic residues. Polar residues predominate over residues 429-441 (ENLQTKNPTTMTS).

This is an uncharacterized protein from Mus musculus (Mouse).